A 143-amino-acid chain; its full sequence is Nucleoside diphosphate kinase (143 aa).

ATP contacts are provided by K11, F59, R87, T93, R104, and N114. H117 acts as the Pros-phosphohistidine intermediate in catalysis.

It belongs to the NDK family. In terms of assembly, homotetramer. The cofactor is Mg(2+).

Its subcellular location is the cytoplasm. The catalysed reaction is dZDP + ATP = dZTP + ADP. It carries out the reaction a 2'-deoxyribonucleoside 5'-diphosphate + ATP = a 2'-deoxyribonucleoside 5'-triphosphate + ADP. The enzyme catalyses a ribonucleoside 5'-diphosphate + ATP = a ribonucleoside 5'-triphosphate + ADP. The protein operates within purine metabolism. Major role in the synthesis of nucleoside triphosphates other than ATP. The ATP gamma phosphate is transferred to the NDP beta phosphate via a ping-pong mechanism, using a phosphorylated active-site intermediate. Functionally, (Microbial infection) Catalyzes the phosphorylation of dZDP to dZTP, when the bacterium is infected by a phage that produces the substrate for the synthesis of dZTP (2- amino-2'-deoxyadenosine 5'-triphosphate), which is then used by the phage as a DNA polymerase substrate. The polypeptide is Nucleoside diphosphate kinase (Salmonella paratyphi C (strain RKS4594)).